The chain runs to 377 residues: Chaperone protein DnaJ (377 aa).

The 66-residue stretch at 5-70 (DFYEVLGVER…SKRAAYDQYG (66 aa)) folds into the J domain. The CR-type zinc-finger motif lies at 136–214 (GTTVTIRVPT…CHGQGRVEEQ (79 aa)). 8 residues coordinate Zn(2+): cysteine 149, cysteine 152, cysteine 166, cysteine 169, cysteine 188, cysteine 191, cysteine 202, and cysteine 205. CXXCXGXG motif repeat units follow at residues 149 to 156 (CKTCNGSG), 166 to 173 (CTTCGGIG), 188 to 195 (CPRCHGTG), and 202 to 209 (CGSCHGQG).

This sequence belongs to the DnaJ family. Homodimer. Requires Zn(2+) as cofactor.

It localises to the cytoplasm. Its function is as follows. Participates actively in the response to hyperosmotic and heat shock by preventing the aggregation of stress-denatured proteins and by disaggregating proteins, also in an autonomous, DnaK-independent fashion. Unfolded proteins bind initially to DnaJ; upon interaction with the DnaJ-bound protein, DnaK hydrolyzes its bound ATP, resulting in the formation of a stable complex. GrpE releases ADP from DnaK; ATP binding to DnaK triggers the release of the substrate protein, thus completing the reaction cycle. Several rounds of ATP-dependent interactions between DnaJ, DnaK and GrpE are required for fully efficient folding. Also involved, together with DnaK and GrpE, in the DNA replication of plasmids through activation of initiation proteins. The protein is Chaperone protein DnaJ of Pseudomonas aeruginosa (strain LESB58).